Reading from the N-terminus, the 3394-residue chain is Protein PFC0760c (3394 aa).

3 stretches are compositionally biased toward low complexity: residues 471-508 (NNNDNDNNNDNNNNNNNNNDNNNNNNNDNNNNNNNYNN), 515-528 (NMNSGNHPNSNNLH), and 786-841 (NNQN…NQNN). Disordered regions lie at residues 471–539 (NNND…DENN), 779–844 (MSSN…NAGI), 1038–1099 (NKKK…NNDD), 1892–1918 (TTTTTNNNNNNDNNNDNNNDNNDNNND), 2648–2693 (KMDL…DNHL), 2835–2909 (AKNE…NSNN), 3000–3057 (VSVG…DVNT), and 3107–3394 (DYVN…NSEE). The span at 1038-1097 (NKKKNNDGDNKSQEDDDGNKKKNNDGDNKSQEDDDGNKKKNNDGDNKSQEDDYGNKKKNN) shows a compositional bias: basic and acidic residues. Over residues 2657–2671 (GDDDDDDDDDDDDDN) the composition is skewed to acidic residues. A compositionally biased stretch (low complexity) spans 2672–2686 (NNNNNNNNNNNNNNM). A compositionally biased stretch (polar residues) spans 2836–2846 (KNENYPVSTHY). Low complexity-rich tracts occupy residues 2855 to 2865 (DNINNDNNNDN) and 2872 to 2909 (NDNINNDNNNDNINNDNINNDNINNDNNNDNNNDNSNN). 2 stretches are compositionally biased toward acidic residues: residues 3007–3047 (DNND…EEKE) and 3147–3257 (DDDE…DDND). The segment covering 3258–3292 (NDHNDDNNDEEKYSCHDDKNEHTNNDLLNIDHDNN) has biased composition (basic and acidic residues). Polar residues predominate over residues 3300 to 3309 (LYSTYNVSVS). The segment covering 3310-3320 (HNKDPSNKENE) has biased composition (basic and acidic residues). Positions 3321–3330 (IQNLISIDSS) are enriched in polar residues. The segment covering 3331-3379 (NENDENDENDENDENDENDENDENDENDENDENDEKDENDENDENDENF) has biased composition (acidic residues). Over residues 3385 to 3394 (GTLNEMNSEE) the composition is skewed to polar residues.

This is Protein PFC0760c from Plasmodium falciparum (isolate 3D7).